A 233-amino-acid chain; its full sequence is Phosphatidylserine decarboxylase proenzyme (233 aa).

The active-site Schiff-base intermediate with substrate; via pyruvic acid is the Ser-201. Ser-201 carries the post-translational modification Pyruvic acid (Ser); by autocatalysis.

This sequence belongs to the phosphatidylserine decarboxylase family. PSD-A subfamily. In terms of assembly, heterodimer of a large membrane-associated beta subunit and a small pyruvoyl-containing alpha subunit. The cofactor is pyruvate. In terms of processing, is synthesized initially as an inactive proenzyme. Formation of the active enzyme involves a self-maturation process in which the active site pyruvoyl group is generated from an internal serine residue via an autocatalytic post-translational modification. Two non-identical subunits are generated from the proenzyme in this reaction, and the pyruvate is formed at the N-terminus of the alpha chain, which is derived from the carboxyl end of the proenzyme. The post-translation cleavage follows an unusual pathway, termed non-hydrolytic serinolysis, in which the side chain hydroxyl group of the serine supplies its oxygen atom to form the C-terminus of the beta chain, while the remainder of the serine residue undergoes an oxidative deamination to produce ammonia and the pyruvoyl prosthetic group on the alpha chain.

The protein resides in the cell membrane. It carries out the reaction a 1,2-diacyl-sn-glycero-3-phospho-L-serine + H(+) = a 1,2-diacyl-sn-glycero-3-phosphoethanolamine + CO2. The protein operates within phospholipid metabolism; phosphatidylethanolamine biosynthesis; phosphatidylethanolamine from CDP-diacylglycerol: step 2/2. In terms of biological role, catalyzes the formation of phosphatidylethanolamine (PtdEtn) from phosphatidylserine (PtdSer). The chain is Phosphatidylserine decarboxylase proenzyme from Mycolicibacterium vanbaalenii (strain DSM 7251 / JCM 13017 / BCRC 16820 / KCTC 9966 / NRRL B-24157 / PYR-1) (Mycobacterium vanbaalenii).